Here is a 286-residue protein sequence, read N- to C-terminus: 4-hydroxy-tetrahydrodipicolinate synthase (286 aa).

Thr-42 is a pyruvate binding site. Tyr-129 serves as the catalytic Proton donor/acceptor. Residue Lys-157 is the Schiff-base intermediate with substrate of the active site. Val-196 contributes to the pyruvate binding site.

Belongs to the DapA family. As to quaternary structure, homotetramer; dimer of dimers.

Its subcellular location is the cytoplasm. The catalysed reaction is L-aspartate 4-semialdehyde + pyruvate = (2S,4S)-4-hydroxy-2,3,4,5-tetrahydrodipicolinate + H2O + H(+). The protein operates within amino-acid biosynthesis; L-lysine biosynthesis via DAP pathway; (S)-tetrahydrodipicolinate from L-aspartate: step 3/4. Functionally, catalyzes the condensation of (S)-aspartate-beta-semialdehyde [(S)-ASA] and pyruvate to 4-hydroxy-tetrahydrodipicolinate (HTPA). The protein is 4-hydroxy-tetrahydrodipicolinate synthase of Chlamydia muridarum (strain MoPn / Nigg).